A 402-amino-acid chain; its full sequence is Elongation factor Tu (402 aa).

The 196-residue stretch at 16–211 (KEHINIGTIG…AVDSYIDSPV (196 aa)) folds into the tr-type G domain. Residues 25–32 (GHVDHGKT) form a G1 region. 25–32 (GHVDHGKT) serves as a coordination point for GTP. Threonine 32 provides a ligand contact to Mg(2+). A G2 region spans residues 66 to 70 (GITIN). The tract at residues 87-90 (DCPG) is G3. GTP contacts are provided by residues 87 to 91 (DCPGH) and 142 to 145 (NKID). Residues 142–145 (NKID) form a G4 region. The interval 181–183 (SAR) is G5.

This sequence belongs to the TRAFAC class translation factor GTPase superfamily. Classic translation factor GTPase family. EF-Tu/EF-1A subfamily. In terms of assembly, monomer.

It is found in the cytoplasm. It carries out the reaction GTP + H2O = GDP + phosphate + H(+). In terms of biological role, GTP hydrolase that promotes the GTP-dependent binding of aminoacyl-tRNA to the A-site of ribosomes during protein biosynthesis. The protein is Elongation factor Tu of Mesomycoplasma hyopneumoniae (strain J / ATCC 25934 / NCTC 10110) (Mycoplasma hyopneumoniae).